A 573-amino-acid chain; its full sequence is Dihydroxy-acid dehydratase (573 aa).

Cys-62 contributes to the [2Fe-2S] cluster binding site. Asp-94 is a binding site for Mg(2+). [2Fe-2S] cluster is bound at residue Cys-135. 2 residues coordinate Mg(2+): Asp-136 and Lys-137. Lys-137 is subject to N6-carboxylysine. Residue Cys-212 participates in [2Fe-2S] cluster binding. Glu-463 contributes to the Mg(2+) binding site. Catalysis depends on Ser-489, which acts as the Proton acceptor.

This sequence belongs to the IlvD/Edd family. As to quaternary structure, homodimer. [2Fe-2S] cluster serves as cofactor. Requires Mg(2+) as cofactor.

It carries out the reaction (2R)-2,3-dihydroxy-3-methylbutanoate = 3-methyl-2-oxobutanoate + H2O. The catalysed reaction is (2R,3R)-2,3-dihydroxy-3-methylpentanoate = (S)-3-methyl-2-oxopentanoate + H2O. The protein operates within amino-acid biosynthesis; L-isoleucine biosynthesis; L-isoleucine from 2-oxobutanoate: step 3/4. Its pathway is amino-acid biosynthesis; L-valine biosynthesis; L-valine from pyruvate: step 3/4. Its function is as follows. Functions in the biosynthesis of branched-chain amino acids. Catalyzes the dehydration of (2R,3R)-2,3-dihydroxy-3-methylpentanoate (2,3-dihydroxy-3-methylvalerate) into 2-oxo-3-methylpentanoate (2-oxo-3-methylvalerate) and of (2R)-2,3-dihydroxy-3-methylbutanoate (2,3-dihydroxyisovalerate) into 2-oxo-3-methylbutanoate (2-oxoisovalerate), the penultimate precursor to L-isoleucine and L-valine, respectively. This Arthrobacter sp. (strain FB24) protein is Dihydroxy-acid dehydratase.